The sequence spans 340 residues: Delta(1)-pyrroline-2-carboxylate reductase 2 (340 aa).

The Charge relay system role is filled by S50. The Proton donor role is filled by H51. R55 lines the substrate pocket. 123-127 (HFSAL) contacts NADP(+). T163 is a binding site for substrate. Residue 181-183 (DFA) participates in NADP(+) binding. Position 189–190 (189–190 (RG)) interacts with substrate. D191 serves as the catalytic Charge relay system. Residues 232–233 (HK) and 307–313 (RLPSQRR) contribute to the NADP(+) site.

The protein belongs to the LDH2/MDH2 oxidoreductase family. As to quaternary structure, homodimer.

The catalysed reaction is L-proline + NAD(+) = 1-pyrroline-2-carboxylate + NADH + H(+). The enzyme catalyses L-proline + NADP(+) = 1-pyrroline-2-carboxylate + NADPH + H(+). Its function is as follows. Catalyzes the reduction of Delta(1)-pyrroline-2-carboxylate (Pyr2C) to L-proline, using NADPH as the electron donor. May be involved in a degradation pathway that converts trans-3-hydroxy-L-proline (t3LHyp) to L-proline. This chain is Delta(1)-pyrroline-2-carboxylate reductase 2, found in Burkholderia multivorans (strain ATCC 17616 / 249).